We begin with the raw amino-acid sequence, 369 residues long: Anhydro-N-acetylmuramic acid kinase (369 aa).

Residue 12–19 (GTSMDGVD) coordinates ATP.

It belongs to the anhydro-N-acetylmuramic acid kinase family.

It catalyses the reaction 1,6-anhydro-N-acetyl-beta-muramate + ATP + H2O = N-acetyl-D-muramate 6-phosphate + ADP + H(+). The protein operates within amino-sugar metabolism; 1,6-anhydro-N-acetylmuramate degradation. It functions in the pathway cell wall biogenesis; peptidoglycan recycling. Its function is as follows. Catalyzes the specific phosphorylation of 1,6-anhydro-N-acetylmuramic acid (anhMurNAc) with the simultaneous cleavage of the 1,6-anhydro ring, generating MurNAc-6-P. Is required for the utilization of anhMurNAc either imported from the medium or derived from its own cell wall murein, and thus plays a role in cell wall recycling. The polypeptide is Anhydro-N-acetylmuramic acid kinase (Shewanella baltica (strain OS155 / ATCC BAA-1091)).